Reading from the N-terminus, the 445-residue chain is Histidine--tRNA ligase (445 aa).

Belongs to the class-II aminoacyl-tRNA synthetase family. In terms of assembly, homodimer.

The protein localises to the cytoplasm. It carries out the reaction tRNA(His) + L-histidine + ATP = L-histidyl-tRNA(His) + AMP + diphosphate + H(+). This is Histidine--tRNA ligase from Mycoplasma mobile (strain ATCC 43663 / 163K / NCTC 11711) (Mesomycoplasma mobile).